The primary structure comprises 260 residues: Thiazole synthase (260 aa).

K100 functions as the Schiff-base intermediate with DXP in the catalytic mechanism. 1-deoxy-D-xylulose 5-phosphate is bound by residues G161, 187-188, and 209-210; these read AG and NT.

This sequence belongs to the ThiG family. Homotetramer. Forms heterodimers with either ThiH or ThiS.

The protein localises to the cytoplasm. It catalyses the reaction [ThiS sulfur-carrier protein]-C-terminal-Gly-aminoethanethioate + 2-iminoacetate + 1-deoxy-D-xylulose 5-phosphate = [ThiS sulfur-carrier protein]-C-terminal Gly-Gly + 2-[(2R,5Z)-2-carboxy-4-methylthiazol-5(2H)-ylidene]ethyl phosphate + 2 H2O + H(+). It participates in cofactor biosynthesis; thiamine diphosphate biosynthesis. Functionally, catalyzes the rearrangement of 1-deoxy-D-xylulose 5-phosphate (DXP) to produce the thiazole phosphate moiety of thiamine. Sulfur is provided by the thiocarboxylate moiety of the carrier protein ThiS. In vitro, sulfur can be provided by H(2)S. This Sorangium cellulosum (strain So ce56) (Polyangium cellulosum (strain So ce56)) protein is Thiazole synthase.